We begin with the raw amino-acid sequence, 155 residues long: Transcriptional repressor NrdR (155 aa).

Over residues 1–11 (MECPNCHQNAS) the composition is skewed to polar residues. A disordered region spans residues 1-22 (MECPNCHQNASRVIDSRPSDEN). The segment at 3 to 34 (CPNCHQNASRVIDSRPSDENRAIRRRRECENC) is a zinc-finger region. The ATP-cone domain maps to 49-139 (LLVIKNDGTR…IYREFKDMSS (91 aa)).

The protein belongs to the NrdR family. It depends on Zn(2+) as a cofactor.

Its function is as follows. Negatively regulates transcription of bacterial ribonucleotide reductase nrd genes and operons by binding to NrdR-boxes. The sequence is that of Transcriptional repressor NrdR from Lactobacillus helveticus (strain DPC 4571).